We begin with the raw amino-acid sequence, 97 residues long: Secreted RxLR effector protein BLR05 (97 aa).

Positions Met-1–Ala-21 are cleaved as a signal peptide. Residues Arg-32–Asp-60 carry the RxLR-dEER motif. The helical transmembrane segment at Ile-69–Ala-89 threads the bilayer.

This sequence belongs to the RxLR effector family. In terms of assembly, interacts with host transcription factor NAC069.

The protein resides in the secreted. Its subcellular location is the host endoplasmic reticulum membrane. Functionally, secreted effector that inhibits stress-induced relocalization of the transcription factor NAC069 to the nucleus, thus affecting its broad role in abiotic and biotic stress responses. This is Secreted RxLR effector protein BLR05 from Bremia lactucae (Lettuce downy mildew).